The sequence spans 612 residues: MITSVLRYVLALYFCMGIAHGAYFSQFSMRAPDHDPCHDHTGRPVRCVPEFINAAFGKPVIASDTCGTNRPDKYCTVKEGPDGIIREQCDTCDARNHFQSHPASLLTDLNSIGNMTCWVSTPSLSPQNVSLTLSLGKKFELTYVSMHFCSRLPDSMALYKSADFGKTWTPFQFYSSECRRIFGRDPDVSITKSNEQEAVCTASHIMGPGGNRVAFPFLENRPSAQNFENSPVLQDWVTATDIKVVFSRLSPDQAELYGLSNDVNSYGNETDDEVKQRYFYSMGELAVGGRCKCNGHASRCIFDKMGRYTCDCKHNTAGTECEMCKPFHYDRPWGRATANSANSCVACNCNQHAKRCRFDAELFRLSGNRSGGVCLNCRHNTAGRNCHLCKPGFVRDTSLPMTHRKACKSCGCHPVGSLGKSCNQSSGQCVCKPGVTGTTCNRCAKGYQQSRSTVTPCIKIPTKADFIGSSHSEEQDQCSKCRIVPKRLNQKKFCKRDHAVQMVVVSREMVDGWAKYKIVVESVFKRGTENMQRGETSLWISPQGVICKCPKLRVGRRYLLLGKNDSDHERDGLMVNPQTVLVEWEDDIMDKVLRFSKKDKLGQCPEITSHRY.

Positions 1–21 are cleaved as a signal peptide; that stretch reads MITSVLRYVLALYFCMGIAHG. The 248-residue stretch at 43 to 290 folds into the Laminin N-terminal domain; the sequence is RPVRCVPEFI…SMGELAVGGR (248 aa). N-linked (GlcNAc...) asparagine glycosylation is found at asparagine 114, asparagine 128, and asparagine 268. A disulfide bond links cysteine 117 and cysteine 149. 14 cysteine pairs are disulfide-bonded: cysteine 291-cysteine 300, cysteine 293-cysteine 310, cysteine 312-cysteine 321, cysteine 324-cysteine 344, cysteine 347-cysteine 356, cysteine 349-cysteine 374, cysteine 377-cysteine 386, cysteine 389-cysteine 407, cysteine 410-cysteine 422, cysteine 412-cysteine 429, cysteine 431-cysteine 440, cysteine 443-cysteine 457, cysteine 478-cysteine 547, and cysteine 494-cysteine 604. 3 Laminin EGF-like domains span residues 291–346, 347–409, and 410–459; these read CKCN…SCVA, CNCN…ACKS, and CGCH…PCIK. An N-linked (GlcNAc...) asparagine glycan is attached at asparagine 368. Asparagine 423 carries N-linked (GlcNAc...) asparagine glycosylation. The NTR domain occupies 478–604; the sequence is CSKCRIVPKR…FSKKDKLGQC (127 aa). N-linked (GlcNAc...) asparagine glycosylation occurs at asparagine 564.

As to quaternary structure, binds to unc-5 and unc-40 receptors.

The protein localises to the secreted. Its subcellular location is the extracellular space. It is found in the extracellular matrix. It localises to the basement membrane. Functionally, component of an extracellular matrix cue that guides dorsoventral migrations on the epidermis. Required for the guidance of pioneer axons and migrating cells along the body wall. In particular, it is required for the guidance of axons from neurons, including SubL neurons and AIY interneurons, into the nerve ring. During gonad morphogenesis, involved in distal tip cell (DTC) migration from the dorsal side of the hermaphrodite body to the midbody to allow for formation of gonad arms. Its association with either unc-40 or unc-5 receptors will lead to axon attraction or repulsion, respectively. Involved in dendritic morphogenesis; may act by association with unc-40 at the tips of growing dendrites for interaction with unc-5 on the apposing branch to induce mutual repulsion. Involved in the positioning of ray 1, the most anterior ray sensilium, in the male tail. Required for the formation of synapses between the AVA interneurons and the PHB sensory neurons. This Caenorhabditis elegans protein is Netrin unc-6.